The sequence spans 531 residues: Importin subunit alpha-2 (531 aa).

The segment covering 1-10 (MTLTETSLSH) has biased composition (polar residues). The tract at residues 1 to 88 (MTLTETSLSH…ISHQQSSTRL (88 aa)) is disordered. Residues 5–67 (ETSLSHNAEE…RNIVDVDEGG (63 aa)) form the IBB domain. Basic and acidic residues-rich tracts occupy residues 11 to 20 (NAEEGKDEGG) and 29 to 50 (TKHEELRRRRTECSVEIRKQKG). Residues 62 to 75 (DVDEGGNSESELEE) are compositionally biased toward acidic residues. ARM repeat units follow at residues 122 to 161 (NPPIDEVIHCGLLQALVQALSVENERVQYEAAWALTNIVS), 164 to 203 (TEQTIAAVEAGVTIPLIHLSVHQSAQISEQALWAVANIAG), 250 to 290 (KNPH…YLTD), 293 to 331 (DEQIELARESGVLPHVVAFFKEAENLVAPALRTLGNVAT), 334 to 374 (DSLT…NIIA), 377 to 416 (QKQIQAVLDANLLPVLINVLKSGDHKCQFEASWALSNLAQ), and 420 to 459 (NRQVVAMLEDNVVPALCQALLQTNTDMLNNTLETLYTLML). The segment at 511 to 531 (DDAGEKESHENADPQDNKWSF) is disordered. The span at 515–531 (EKESHENADPQDNKWSF) shows a compositional bias: basic and acidic residues.

The protein belongs to the importin alpha family. As to quaternary structure, forms a complex with an importin beta subunit. Interacts with akir-1. Germline tissues. Expressed exclusively in germ line cells from the early embryonic through adult stages.

Its subcellular location is the cytoplasm. It localises to the nucleus. The protein localises to the nucleus envelope. In terms of biological role, nuclear transport receptor that mediates nuclear import of proteins, and which is involved in sister chromatid cohesion. Binds specifically and directly to substrates containing either a simple or bipartite nuclear localization signals (NLS) motif. Promotes docking of import substrates to the nuclear envelope. Together with akir-1 adapter, required for the import and load of cohesin complex proteins in meiotic nuclei. The polypeptide is Importin subunit alpha-2 (Caenorhabditis elegans).